The following is a 217-amino-acid chain: Thiamine-phosphate synthase (217 aa).

Residues 38-42 (QYRDK) and asparagine 70 contribute to the 4-amino-2-methyl-5-(diphosphooxymethyl)pyrimidine site. The Mg(2+) site is built by aspartate 71 and aspartate 90. Serine 109 serves as a coordination point for 4-amino-2-methyl-5-(diphosphooxymethyl)pyrimidine. 136 to 138 (SIT) lines the 2-[(2R,5Z)-2-carboxy-4-methylthiazol-5(2H)-ylidene]ethyl phosphate pocket. Residue lysine 139 participates in 4-amino-2-methyl-5-(diphosphooxymethyl)pyrimidine binding. Residue glycine 166 coordinates 2-[(2R,5Z)-2-carboxy-4-methylthiazol-5(2H)-ylidene]ethyl phosphate.

It belongs to the thiamine-phosphate synthase family. The cofactor is Mg(2+).

The enzyme catalyses 2-[(2R,5Z)-2-carboxy-4-methylthiazol-5(2H)-ylidene]ethyl phosphate + 4-amino-2-methyl-5-(diphosphooxymethyl)pyrimidine + 2 H(+) = thiamine phosphate + CO2 + diphosphate. It catalyses the reaction 2-(2-carboxy-4-methylthiazol-5-yl)ethyl phosphate + 4-amino-2-methyl-5-(diphosphooxymethyl)pyrimidine + 2 H(+) = thiamine phosphate + CO2 + diphosphate. The catalysed reaction is 4-methyl-5-(2-phosphooxyethyl)-thiazole + 4-amino-2-methyl-5-(diphosphooxymethyl)pyrimidine + H(+) = thiamine phosphate + diphosphate. The protein operates within cofactor biosynthesis; thiamine diphosphate biosynthesis; thiamine phosphate from 4-amino-2-methyl-5-diphosphomethylpyrimidine and 4-methyl-5-(2-phosphoethyl)-thiazole: step 1/1. Condenses 4-methyl-5-(beta-hydroxyethyl)thiazole monophosphate (THZ-P) and 2-methyl-4-amino-5-hydroxymethyl pyrimidine pyrophosphate (HMP-PP) to form thiamine monophosphate (TMP). This chain is Thiamine-phosphate synthase, found in Nitrosococcus oceani (strain ATCC 19707 / BCRC 17464 / JCM 30415 / NCIMB 11848 / C-107).